The following is a 130-amino-acid chain: Large ribosomal subunit protein bL20 (130 aa).

This sequence belongs to the bacterial ribosomal protein bL20 family.

Binds directly to 23S ribosomal RNA and is necessary for the in vitro assembly process of the 50S ribosomal subunit. It is not involved in the protein synthesizing functions of that subunit. The sequence is that of Large ribosomal subunit protein bL20 from Clavibacter sepedonicus (Clavibacter michiganensis subsp. sepedonicus).